The primary structure comprises 351 residues: C-X-C chemokine receptor type 1 (351 aa).

Residues 1–46 (MSNITDPQMWDYDGDPNFTGMPPIDEDYRPCRLETETLNKYVVIVT) lie on the Extracellular side of the membrane. Asn-3 carries N-linked (GlcNAc...) asparagine glycosylation. The helical transmembrane segment at 47–67 (YALVFLLSLLGNSLVMLVILY) threads the bilayer. Residues 68 to 76 (SRVGRSVTD) lie on the Cytoplasmic side of the membrane. A helical membrane pass occupies residues 77–97 (VYLLNLALADLLFALTLPIWA). Over 98 to 112 (VSKVNGWIFGTLLCK) the chain is Extracellular. Cys-111 and Cys-188 form a disulfide bridge. A helical transmembrane segment spans residues 113 to 133 (VVSLLKEVNFYSGILLLACIS). The Cytoplasmic portion of the chain corresponds to 134–154 (VDRYLAIVHATRTLTQKRHLV). Residues 155–175 (KFVCLSCWGLSMILSLPFFLF) traverse the membrane as a helical segment. Residues 176-209 (RQAYHPKNSSPVCYEVLGNDTAKWRMVLRILPHT) lie on the Extracellular side of the membrane. N-linked (GlcNAc...) asparagine glycosylation is present at Asn-194. The helical transmembrane segment at 210 to 230 (FGFIVPLFVMLFCYGFALCTL) threads the bilayer. At 231 to 243 (FKAHMGQKHRAMR) the chain is on the cytoplasmic side. Residues 244-264 (VIFAVVLIFLLCWLPYNLVLL) form a helical membrane-spanning segment. The Extracellular segment spans residues 265 to 289 (ADTLMRTQLIKESCERRNDIGWALD). Residues 290–310 (ATEILGFLHSCLNPIIYAFIG) form a helical membrane-spanning segment. At 311–351 (QNFRHGFLKILAMHGLVSKEFLARHHVTSYTSSSVNVSSNL) the chain is on the cytoplasmic side.

It belongs to the G-protein coupled receptor 1 family. Interacts with IL8. Interacts with GNAI2.

The protein localises to the cell membrane. Functionally, receptor to interleukin-8, which is a powerful neutrophils chemotactic factor. Binding of IL-8 to the receptor causes activation of neutrophils. This response is mediated via a G-protein that activates a phosphatidylinositol-calcium second messenger system. In Pongo pygmaeus (Bornean orangutan), this protein is C-X-C chemokine receptor type 1 (CXCR1).